The sequence spans 429 residues: MRTCGTSSEGQDECCLYGLSAMQGWRISMEDAHAAVLDLQAKSTGGSEKPTDPDKRLAFFGVYDGHGGDKVALFAGENVHKIVAKQEAFAKGDIEQALKDGFLATDRAILEDPKYEEEVSGCTAAVSVISKNKIWVANAGDSRSVLGVKGRAKPLSFDHKPQNEGEKARISAAGGFVDFGRVNGNLALSRAIGDFEFKKSPELSPEQQIVTAYPDVTVHEVTDDDEFLVIACDGIWDCQSSQSVVEFVRRGIAAKQELYRICENMMDNCLASNSETGGVGCDNMTMIIIGLLNGKTKEEWYNQISERVANGDGPCAPPEYGKSEFRGPGIRNQFEETPDNYDLENDRSRGFSVRSGRIILLGDGTELIPEQNDEELFDQREENRDVTNHLQHDKAEETSTAANLSESPSSANKNSSGSGTEATEKSASS.

The PPM-type phosphatase domain maps to 16 to 291; it reads LYGLSAMQGW…DNMTMIIIGL (276 aa). The Mn(2+) site is built by Asp64, Gly65, Asp233, and Asp282. Disordered regions lie at residues 320-348 and 384-429; these read YGKS…NDRS and RDVT…SASS. Residues 384–397 show a composition bias toward basic and acidic residues; the sequence is RDVTNHLQHDKAEE. Low complexity predominate over residues 405-419; sequence SESPSSANKNSSGSG.

It belongs to the PP2C family. The cofactor is Mg(2+). Requires Mn(2+) as cofactor.

Its subcellular location is the cytoplasm. It is found in the nucleus. It carries out the reaction O-phospho-L-seryl-[protein] + H2O = L-seryl-[protein] + phosphate. It catalyses the reaction O-phospho-L-threonyl-[protein] + H2O = L-threonyl-[protein] + phosphate. Dephosphorylating regulator for many key proteins. Dephosphorylates sakA, to negatively regulate the stress-activated p38MAPK cascade. The polypeptide is Protein phosphatase 2C homolog 2 (Aspergillus fumigatus (strain ATCC MYA-4609 / CBS 101355 / FGSC A1100 / Af293) (Neosartorya fumigata)).